A 268-amino-acid chain; its full sequence is Secreted RxLR effector protein 5 (268 aa).

Residues 1 to 21 (MRGAFYMAITLFLARSRSATA) form the signal peptide. The RxLR-dEER motif lies at 48 to 63 (RYLRDGLALSAANEER). The N-linked (GlcNAc...) asparagine glycan is linked to asparagine 104.

Belongs to the RxLR effector family.

The protein localises to the secreted. The protein resides in the host nucleus. Its function is as follows. Effector that acts as a broad suppressor of cell death to interrupt plant immunity. Inhibits cell death induced by cell death-inducing proteins, including the PAMP elicitor INF1 from P.infestans. This chain is Secreted RxLR effector protein 5, found in Plasmopara viticola (Downy mildew of grapevine).